The primary structure comprises 281 residues: Ribosomal protein L11 methyltransferase (281 aa).

Residues threonine 133, glycine 154, aspartate 175, and asparagine 216 each coordinate S-adenosyl-L-methionine.

Belongs to the methyltransferase superfamily. PrmA family.

It is found in the cytoplasm. It catalyses the reaction L-lysyl-[protein] + 3 S-adenosyl-L-methionine = N(6),N(6),N(6)-trimethyl-L-lysyl-[protein] + 3 S-adenosyl-L-homocysteine + 3 H(+). Functionally, methylates ribosomal protein L11. This Campylobacter jejuni subsp. jejuni serotype O:6 (strain 81116 / NCTC 11828) protein is Ribosomal protein L11 methyltransferase.